A 193-amino-acid chain; its full sequence is Holliday junction branch migration complex subunit RuvA (193 aa).

Positions 1–63 (MIAHIQGKLV…EDSHSLYGFA (63 aa)) are domain I. Positions 64–142 (EKSEKEIFKL…KLYDLDQVSI (79 aa)) are domain II. Residues 143–145 (SQS) are flexible linker. Positions 145 to 193 (SNTNKDEALSALEVLGFIRKSAEKVVEKIVATMPDATVETIIKQALKNL) are domain III.

This sequence belongs to the RuvA family. In terms of assembly, homotetramer. Forms an RuvA(8)-RuvB(12)-Holliday junction (HJ) complex. HJ DNA is sandwiched between 2 RuvA tetramers; dsDNA enters through RuvA and exits via RuvB. An RuvB hexamer assembles on each DNA strand where it exits the tetramer. Each RuvB hexamer is contacted by two RuvA subunits (via domain III) on 2 adjacent RuvB subunits; this complex drives branch migration. In the full resolvosome a probable DNA-RuvA(4)-RuvB(12)-RuvC(2) complex forms which resolves the HJ.

The protein resides in the cytoplasm. In terms of biological role, the RuvA-RuvB-RuvC complex processes Holliday junction (HJ) DNA during genetic recombination and DNA repair, while the RuvA-RuvB complex plays an important role in the rescue of blocked DNA replication forks via replication fork reversal (RFR). RuvA specifically binds to HJ cruciform DNA, conferring on it an open structure. The RuvB hexamer acts as an ATP-dependent pump, pulling dsDNA into and through the RuvAB complex. HJ branch migration allows RuvC to scan DNA until it finds its consensus sequence, where it cleaves and resolves the cruciform DNA. The polypeptide is Holliday junction branch migration complex subunit RuvA (Flavobacterium psychrophilum (strain ATCC 49511 / DSM 21280 / CIP 103535 / JIP02/86)).